A 495-amino-acid chain; its full sequence is Cysteine--tRNA ligase (495 aa).

Cys-29 contacts Zn(2+). The 'HIGH' region motif lies at 31–41 (PTVYDYGHIGN). The Zn(2+) site is built by Cys-211, His-236, and Glu-240. The 'KMSKS' region motif lies at 268-272 (KMSKS). Lys-271 lines the ATP pocket.

Belongs to the class-I aminoacyl-tRNA synthetase family. As to quaternary structure, monomer. The cofactor is Zn(2+).

The protein resides in the cytoplasm. It catalyses the reaction tRNA(Cys) + L-cysteine + ATP = L-cysteinyl-tRNA(Cys) + AMP + diphosphate. This Koribacter versatilis (strain Ellin345) protein is Cysteine--tRNA ligase.